A 440-amino-acid chain; its full sequence is Glycerol-3-phosphate dehydrogenase [NAD(+)] 2, mitochondrial (440 aa).

The transit peptide at 1 to 16 directs the protein to the mitochondrion; sequence MLAVRRLTRYTFLKRT. 3 positions are modified to phosphoserine: Ser-70, Ser-72, and Ser-75. Residues 90–95, Phe-122, and Phe-178 contribute to the NAD(+) site; that span reads GSGNWG. Substrate is bound at residue Lys-201. Ala-234 contacts NAD(+). Residue Lys-294 is the Proton acceptor of the active site. Residues Arg-359 and Gln-388 each contribute to the NAD(+) site. 359–360 lines the substrate pocket; it reads RN.

It belongs to the NAD-dependent glycerol-3-phosphate dehydrogenase family.

The protein resides in the cytoplasm. Its subcellular location is the mitochondrion. The catalysed reaction is sn-glycerol 3-phosphate + NAD(+) = dihydroxyacetone phosphate + NADH + H(+). In terms of biological role, catalyzes the production of glycerol under anaerobic growth conditions. Glycerol production serves as a redox sink by consuming the excess cytosolic NADH during anaerobic metabolism. This chain is Glycerol-3-phosphate dehydrogenase [NAD(+)] 2, mitochondrial, found in Saccharomyces cerevisiae (strain ATCC 204508 / S288c) (Baker's yeast).